Reading from the N-terminus, the 210-residue chain is MAKTYDYLFKLLLIGDSGVGKTCLLFRFSEDAFNTTFISTIGIDFKIRTVELDGKKIKLQIWDTAGQERFRTITTAYYRGAMGIMKVYDITNEKSFDNIKNWIRNIEEHASSDVERMILGNKCDMNEKRQVSKERGEKLAIDYGIKFLETSAKSSINVEEAFITLARDIMTKLNKKMNENSLQEAVDKLKSPPKKPSQKKKQLSFRCSLL.

Position 15-22 (glycine 15–threonine 22) interacts with GTP. Positions phenylalanine 37–phenylalanine 45 match the Effector region motif. GTP contacts are provided by residues aspartate 63 to glutamine 67 and asparagine 121 to aspartate 124. Residue cysteine 207 is modified to Cysteine methyl ester. Cysteine 207 carries S-geranylgeranyl cysteine lipidation. Residues serine 208–leucine 210 constitute a propeptide, removed in mature form.

It belongs to the small GTPase superfamily. Rab family.

It is found in the cell membrane. The chain is Ras-related protein Rab-8 from Diplobatis ommata (Ocellated electric ray).